Consider the following 480-residue polypeptide: Serralysin (480 aa).

Histidine 181 contributes to the Zn(2+) binding site. Glutamate 182 is a catalytic residue. Residues histidine 185 and histidine 191 each coordinate Zn(2+). Arginine 260, aspartate 263, aspartate 292, glycine 294, glycine 295, aspartate 297, threonine 334, and glutamate 336 together coordinate Ca(2+). 2 Hemolysin-type calcium-binding repeats span residues 339-356 and 357-374; these read IGGSGNDVLIGNDAANTL and KGGAGDDIIYGGLGADNL.

Belongs to the peptidase M10B family. Zn(2+) serves as cofactor. It depends on Ca(2+) as a cofactor.

The protein resides in the secreted. The enzyme catalyses Preferential cleavage of bonds with hydrophobic residues in P1'.. This is Serralysin (prtA) from Photorhabdus laumondii subsp. laumondii (strain DSM 15139 / CIP 105565 / TT01) (Photorhabdus luminescens subsp. laumondii).